An 853-amino-acid polypeptide reads, in one-letter code: Penicillin-binding protein 1A (853 aa).

Topologically, residues 1-6 (MRIAKL) are cytoplasmic. The chain crosses the membrane as a helical; Signal-anchor for type II membrane protein span at residues 7–27 (ILNTLLTLCILGLVAGGMLYF). Residues 28–853 (HLKSELQQPM…TPATQPQELF (826 aa)) are Periplasmic-facing. The tract at residues 37–205 (MQIYTADGKL…STMNPLYSLK (169 aa)) is transglycosylase. Residue glutamate 75 is the Proton donor; for transglycosylase activity of the active site. Residues 387–681 (QRANGEWQLG…RVISGELAFL (295 aa)) form a transpeptidase region. Serine 441 functions as the Acyl-ester intermediate; for transpeptidase activity in the catalytic mechanism. The disordered stretch occupies residues 615–636 (NALKPTDDSTNGEELDQQPETV).

This sequence in the N-terminal section; belongs to the glycosyltransferase 51 family. In the C-terminal section; belongs to the transpeptidase family.

It is found in the cell inner membrane. The catalysed reaction is [GlcNAc-(1-&gt;4)-Mur2Ac(oyl-L-Ala-gamma-D-Glu-L-Lys-D-Ala-D-Ala)](n)-di-trans,octa-cis-undecaprenyl diphosphate + beta-D-GlcNAc-(1-&gt;4)-Mur2Ac(oyl-L-Ala-gamma-D-Glu-L-Lys-D-Ala-D-Ala)-di-trans,octa-cis-undecaprenyl diphosphate = [GlcNAc-(1-&gt;4)-Mur2Ac(oyl-L-Ala-gamma-D-Glu-L-Lys-D-Ala-D-Ala)](n+1)-di-trans,octa-cis-undecaprenyl diphosphate + di-trans,octa-cis-undecaprenyl diphosphate + H(+). It carries out the reaction Preferential cleavage: (Ac)2-L-Lys-D-Ala-|-D-Ala. Also transpeptidation of peptidyl-alanyl moieties that are N-acyl substituents of D-alanine.. It participates in cell wall biogenesis; peptidoglycan biosynthesis. Its function is as follows. Cell wall formation. Synthesis of cross-linked peptidoglycan from the lipid intermediates. The enzyme has a penicillin-insensitive transglycosylase N-terminal domain (formation of linear glycan strands) and a penicillin-sensitive transpeptidase C-terminal domain (cross-linking of the peptide subunits). The sequence is that of Penicillin-binding protein 1A (mrcA) from Haemophilus influenzae (strain ATCC 51907 / DSM 11121 / KW20 / Rd).